We begin with the raw amino-acid sequence, 137 residues long: 2-iminobutanoate/2-iminopropanoate deaminase (137 aa).

Position 2 is an N-acetylserine (Ser-2). An N6-succinyllysine mark is found at Lys-13, Lys-60, and Lys-67. Phosphothreonine is present on Thr-74. The residue at position 136 (Ser-136) is a Phosphoserine.

The protein belongs to the RutC family. In terms of assembly, homotrimer. Interacts with YTHDF2. Expressed predominantly in liver and kidney. Lower levels in lung and brain.

Its subcellular location is the cytoplasm. It localises to the nucleus. The protein localises to the peroxisome. It is found in the mitochondrion. The enzyme catalyses 2-iminobutanoate + H2O = 2-oxobutanoate + NH4(+). It carries out the reaction 2-iminopropanoate + H2O = pyruvate + NH4(+). Catalyzes the hydrolytic deamination of enamine/imine intermediates that form during the course of normal metabolism. May facilitate the release of ammonia from these potentially toxic reactive metabolites, reducing their impact on cellular components. It may act on enamine/imine intermediates formed by several types of pyridoxal-5'-phosphate-dependent dehydratases including L-threonine dehydratase. Functionally, also promotes endoribonucleolytic cleavage of some transcripts by promoting recruitment of the ribonuclease P/MRP complex. Acts by bridging YTHDF2 and the ribonuclease P/MRP complex. RIDA/HRSP12 binds to N6-methyladenosine (m6A)-containing mRNAs containing a 5'-GGUUC-3' motif: cooperative binding of RIDA/HRSP12 and YTHDF2 to such transcripts lead to recruitment of the ribonuclease P/MRP complex and subsequent endoribonucleolytic cleavage. The chain is 2-iminobutanoate/2-iminopropanoate deaminase from Homo sapiens (Human).